Here is a 395-residue protein sequence, read N- to C-terminus: uncharacterized protein (395 aa).

2 disordered regions span residues 185 to 282 and 316 to 372; these read RREV…SSTA and GSST…TCSS. The span at 248–257 shows a compositional bias: basic residues; it reads LHLRTRHPHR. The segment covering 342–360 has biased composition (low complexity); it reads ARASTHSRSSPSASANSRY.

This is an uncharacterized protein from Streptomyces fradiae (Streptomyces roseoflavus).